Consider the following 167-residue polypeptide: MSEAAQLRRGLKPKGKTYGLTNQKRREIREIFDLFDIDGSGSIDASELNVAMRSLGFEMNNQQINELMAEVDKNQSGAIDFDEFVHMMTTKFGERDSIDELSKAFKIIDHDNNGKISPRDIKMIAKELGENFTDNDIEEMIEEADRDKDGEVNLEEFMKMMKRTSYG.

4 consecutive EF-hand domains span residues 23-58 (QKRREIREIFDLFDIDGSGSIDASELNVAMRSLGFE), 59-94 (MNNQQINELMAEVDKNQSGAIDFDEFVHMMTTKFGE), 96-131 (DSIDELSKAFKIIDHDNNGKISPRDIKMIAKELGEN), and 132-167 (FTDNDIEEMIEEADRDKDGEVNLEEFMKMMKRTSYG). Ca(2+) is bound by residues Asp-36, Asp-38, Ser-40, Ser-42, Glu-47, Asp-72, Asn-74, Ser-76, Glu-83, Asp-109, Asp-111, Asn-113, Lys-115, Asp-120, Asp-145, Asp-147, Asp-149, Glu-151, and Glu-156.

This sequence belongs to the centrin family. In terms of assembly, interacts with RAD4. Calcium is required for this interaction. Interacts with SAC3B. In terms of tissue distribution, expressed in leaves, roots, and at lower level in stems. Barely detectable in flower buds and flowers.

The protein localises to the cytoplasm. It is found in the nucleus. Functionally, potential calcium sensor that binds calcium in vitro. Modulates homologous recombination and nucleotide excision repair (NER). Involved in the early response to UV irradiation. This is Calcium-binding protein CML19 from Arabidopsis thaliana (Mouse-ear cress).